Reading from the N-terminus, the 276-residue chain is Undecaprenyl-diphosphatase (276 aa).

The next 8 membrane-spanning stretches (helical) occupy residues 1 to 21, 39 to 59, 84 to 104, 115 to 135, 159 to 179, 190 to 210, 222 to 242, and 253 to 273; these read MSWLQVIVLAVVQGLTEFLPV, AGASFTAVTQLGTEVAVLVYF, YRLGWYVIIGTIPIGVIGLLL, LWAIAIALIVFSAVIAAAEYF, LALLPGVSRSGATISAGLFLG, FLLAIPAVFASGLFSLPDAFA, QLLVATVIAFVVGFAAVAWFL, and FVGYRVVLGVVVLILLSTGVV.

The protein belongs to the UppP family.

The protein localises to the cell membrane. The catalysed reaction is di-trans,octa-cis-undecaprenyl diphosphate + H2O = di-trans,octa-cis-undecaprenyl phosphate + phosphate + H(+). Functionally, catalyzes the dephosphorylation of undecaprenyl diphosphate (UPP). Confers resistance to bacitracin. In Mycobacterium sp. (strain KMS), this protein is Undecaprenyl-diphosphatase.